Here is a 376-residue protein sequence, read N- to C-terminus: dTDP-4-amino-4,6-dideoxygalactose transaminase (376 aa).

Lysine 181 is modified (N6-(pyridoxal phosphate)lysine).

This sequence belongs to the DegT/DnrJ/EryC1 family. In terms of assembly, homotetramer. Requires pyridoxal 5'-phosphate as cofactor.

The enzyme catalyses dTDP-4-amino-4,6-dideoxy-alpha-D-galactose + 2-oxoglutarate = dTDP-4-dehydro-6-deoxy-alpha-D-glucose + L-glutamate. It participates in bacterial outer membrane biogenesis; enterobacterial common antigen biosynthesis. Its function is as follows. Catalyzes the synthesis of dTDP-4-amino-4,6-dideoxy-D-galactose (dTDP-Fuc4N) from dTDP-4-keto-6-deoxy-D-glucose (dTDP-D-Glc4O) and L-glutamate. The chain is dTDP-4-amino-4,6-dideoxygalactose transaminase from Escherichia coli (strain K12).